Here is a 530-residue protein sequence, read N- to C-terminus: Protein SLOW WALKER 1 (530 aa).

WD repeat units lie at residues 50–89, 91–130, 133–173, 176–216, 220–258, 262–304, and 320–363; these read NLVS…SSRR, SFRD…ALRT, SHSA…VISD, GHKD…SNWI, NHGL…KMVC, SHNK…VTYS, and GSTR…DESR. Positions 392-399 match the Nuclear localization signal motif; sequence EKKGLKLT.

In terms of tissue distribution, expressed in cells undergoing active cell divisions, including functional megaspores and the female gametophytic cells. Accumulates in roots, stems, leaves, inflorescences and siliques.

Its subcellular location is the nucleus. It is found in the nucleolus. Its function is as follows. Essential protein required for nuclear division and organization during embryo sac development in female gametophyte, probably by promoting rRNA biogenesis essential for the progression of the mitotic division cycles during gametogenesis. Involved in nucleolar processing of pre-18S ribosomal RNA. In Arabidopsis thaliana (Mouse-ear cress), this protein is Protein SLOW WALKER 1.